The sequence spans 354 residues: Histidinol-phosphate aminotransferase (354 aa).

K215 is modified (N6-(pyridoxal phosphate)lysine).

Belongs to the class-II pyridoxal-phosphate-dependent aminotransferase family. Histidinol-phosphate aminotransferase subfamily. As to quaternary structure, homodimer. Requires pyridoxal 5'-phosphate as cofactor.

The catalysed reaction is L-histidinol phosphate + 2-oxoglutarate = 3-(imidazol-4-yl)-2-oxopropyl phosphate + L-glutamate. It functions in the pathway amino-acid biosynthesis; L-histidine biosynthesis; L-histidine from 5-phospho-alpha-D-ribose 1-diphosphate: step 7/9. This Vesicomyosocius okutanii subsp. Calyptogena okutanii (strain HA) protein is Histidinol-phosphate aminotransferase.